A 23-amino-acid chain; its full sequence is Thymidine phosphorylase (23 aa).

It belongs to the thymidine/pyrimidine-nucleoside phosphorylase family. Homodimer.

It carries out the reaction thymidine + phosphate = 2-deoxy-alpha-D-ribose 1-phosphate + thymine. The enzymes which catalyze the reversible phosphorolysis of pyrimidine nucleosides are involved in the degradation of these compounds and in their utilization as carbon and energy sources, or in the rescue of pyrimidine bases for nucleotide synthesis. The polypeptide is Thymidine phosphorylase (deoA) (Lacticaseibacillus rhamnosus (Lactobacillus rhamnosus)).